Reading from the N-terminus, the 102-residue chain is NADH-quinone oxidoreductase subunit K (102 aa).

Transmembrane regions (helical) follow at residues 6-26 (LEHGLAVAGVLFCLGLVGLMV), 30-50 (ILFVLMSLEIMMNAAALAFVV), and 62-82 (VMFILVISLAAAEASIGLAIL).

Belongs to the complex I subunit 4L family. As to quaternary structure, NDH-1 is composed of 13 different subunits. Subunits NuoA, H, J, K, L, M, N constitute the membrane sector of the complex.

Its subcellular location is the cell inner membrane. It catalyses the reaction a quinone + NADH + 5 H(+)(in) = a quinol + NAD(+) + 4 H(+)(out). NDH-1 shuttles electrons from NADH, via FMN and iron-sulfur (Fe-S) centers, to quinones in the respiratory chain. The immediate electron acceptor for the enzyme in this species is believed to be ubiquinone. Couples the redox reaction to proton translocation (for every two electrons transferred, four hydrogen ions are translocated across the cytoplasmic membrane), and thus conserves the redox energy in a proton gradient. In Pseudomonas syringae pv. syringae (strain B728a), this protein is NADH-quinone oxidoreductase subunit K.